The primary structure comprises 266 residues: Putative carbamate hydrolase RutD (266 aa).

Residues 14 to 115 (PVVVLISGLG…TVLISVNGWL (102 aa)) enclose the AB hydrolase-1 domain.

The protein belongs to the AB hydrolase superfamily. Hydrolase RutD family.

It carries out the reaction carbamate + 2 H(+) = NH4(+) + CO2. Functionally, involved in pyrimidine catabolism. May facilitate the hydrolysis of carbamate, a reaction that can also occur spontaneously. The chain is Putative carbamate hydrolase RutD from Shigella sonnei (strain Ss046).